Here is a 548-residue protein sequence, read N- to C-terminus: Probable sucrose-6-phosphate hydrolase (548 aa).

Substrate-binding positions include 105–108, Q124, 167–168, 228–229, and E283; these read LLND, FS, and RD. The active site involves D108.

The protein belongs to the glycosyl hydrolase 32 family.

The protein localises to the cytoplasm. It carries out the reaction Hydrolysis of terminal non-reducing beta-D-fructofuranoside residues in beta-D-fructofuranosides.. It functions in the pathway glycan biosynthesis; sucrose metabolism. In terms of biological role, enables the bacterium to metabolize sucrose as a sole carbon source. This chain is Probable sucrose-6-phosphate hydrolase, found in Vibrio cholerae serotype O1 (strain ATCC 39315 / El Tor Inaba N16961).